The sequence spans 209 residues: Small ribosomal subunit protein uS4 (209 aa).

The 64-residue stretch at 99–162 folds into the S4 RNA-binding domain; the sequence is RRLDNVVYRL…RESNKFQEMK (64 aa).

The protein belongs to the universal ribosomal protein uS4 family. Part of the 30S ribosomal subunit. Contacts protein S5. The interaction surface between S4 and S5 is involved in control of translational fidelity.

In terms of biological role, one of the primary rRNA binding proteins, it binds directly to 16S rRNA where it nucleates assembly of the body of the 30S subunit. Functionally, with S5 and S12 plays an important role in translational accuracy. This Syntrophomonas wolfei subsp. wolfei (strain DSM 2245B / Goettingen) protein is Small ribosomal subunit protein uS4.